The chain runs to 1018 residues: Fibronectin-binding protein A (1018 aa).

The signal sequence occupies residues 1 to 36; that stretch reads MKNNLRYGIRKHKLGAASVFLGTMIVVGMGQDKEAA. A YSIRK-G/S signaling motif motif is present at residues 7-18; sequence YGIRKHKLGAAS. The ligand-binding A region stretch occupies residues 37–511; sequence ASEQKTTTVE…SNKANGNEKN (475 aa). Disordered regions lie at residues 38 to 61 and 78 to 195; these read SEQKTTTVEENGNSATDNKTSETQ and ATVT…ETGT. Composition is skewed to polar residues over residues 39-61 and 78-92; these read EQKTTTVEENGNSATDNKTSETQ and ATVTEQPSNATQVTT. Over residues 112–126 the composition is skewed to basic and acidic residues; it reads TVKEEVVKEEAKPQV. The segment covering 129 to 139 has biased composition (polar residues); sequence TTQSQDNSGDQ. The segment at 194-511 is fibrinogen/elastin/tropoelastin-binding; sequence GTDVTSKVTV…SNKANGNEKN (318 aa). The segment at 512 to 872 is fibronectin-binding; sequence GPIIQNNKFE…EGQQTIEEDT (361 aa). The B-1 repeat unit spans residues 545 to 574; the sequence is EEYDSSTLDIDYHTAIDGGGGYVDGYIETI. The tract at residues 545–604 is 2 X approximate tandem repeats; the sequence is EEYDSSTLDIDYHTAIDGGGGYVDGYIETIEETDSSAIDIDYHTAVDSEAGHVGGYTESS. A B-2 repeat occupies 575–604; that stretch reads EETDSSAIDIDYHTAVDSEAGHVGGYTESS. Disordered stretches follow at residues 595–622, 740–813, and 827–997; these read GHVGGYTESSEESNPIDFEESTHENSKH, LGYE…DIDF, and EIIE…GMLF. The stretch at 745–782 is one D-1 repeat; that stretch reads GQNSGNQSFEEDTEEDKPKYEQGGNIVDIDFDSVPQIH. The interval 745–878 is 4 X approximate tandem repeats, D-3 repeat has more fibronectin-binding activity; it reads GQNSGNQSFE…EEDTTPPIVP (134 aa). The D-2 repeat unit spans residues 783–820; the sequence is GQNKGNQSFEEDTEKDKPKYEHGGNIIDIDFDSVPHIH. The stretch at 821–859 is one D-3 repeat; it reads GFNKHTEIIEEDTNKDKPSYQFGGHNSVDFEEDTLPKVS. The segment covering 827–838 has biased composition (basic and acidic residues); sequence EIIEEDTNKDKP. One copy of the D-4; truncated repeat lies at 860-878; it reads GQNEGQQTIEEDTTPPIVP. The segment covering 875 to 938 has biased composition (pro residues); that stretch reads PIVPPTPPTP…PAEPGKPVPP (64 aa). WR repeat units follow at residues 879–892, 893–906, 907–920, 921–934, and 935–948; these read PTPPTPEVPSEPET, PTPPTPEVPAEPGK, and PVPPAKEEPKKPSK. Residues 879 to 948 are 5 X tandem repeats, Pro-rich (WR); it reads PTPPTPEVPS…AKEEPKKPSK (70 aa). An LPXTG sorting signal motif is present at residues 982–986; that stretch reads LPETG. The residue at position 985 (Thr-985) is a Pentaglycyl murein peptidoglycan amidated threonine. Residues 986-1018 constitute a propeptide, removed by sortase; the sequence is GGEESTNKGMLFGGLFSILGLALLRRNKKNHKA.

It localises to the secreted. The protein resides in the cell wall. Functionally, possesses multiple, substituting fibronectin (Fn) binding regions, each capable of conferring adherence to both soluble and immobilized forms of Fn. This confers to S.aureus the ability to invade endothelial cells both in vivo and in vitro, without requiring additional factors, although in a slow and inefficient way through actin rearrangements in host cells. This invasion process is mediated by integrin alpha-5/beta-1. Promotes bacterial attachment to both soluble and immobilized forms of fibrinogen (Fg) by means of a unique binding site localized within the 17 C-terminal residues of the gamma-chain of human Fg. Both plasma proteins (Fn and Fg) function as a bridge between bacterium and host cell. Promotes attachment to immobilized elastin peptides in a dose-dependent and saturable manner. Promotes attachment to both full-length and segments of immobilized human tropoelastin at multiple sites in a dose and pH-dependent manner. Promotes adherence to and aggregation of activated platelets independently of other S.aureus surface molecules. Is a critical mediator implicated in the induction of experimental endocarditis in rats with catheter-induced aortic vegetations, promoting both colonization and persistence of the bacterium into the host. The sequence is that of Fibronectin-binding protein A (fnbA) from Staphylococcus aureus (strain NCTC 8325 / PS 47).